Here is a 235-residue protein sequence, read N- to C-terminus: Large ribosomal subunit protein uL1 (235 aa).

Belongs to the universal ribosomal protein uL1 family. As to quaternary structure, part of the 50S ribosomal subunit.

Its function is as follows. Binds directly to 23S rRNA. The L1 stalk is quite mobile in the ribosome, and is involved in E site tRNA release. Protein L1 is also a translational repressor protein, it controls the translation of the L11 operon by binding to its mRNA. The polypeptide is Large ribosomal subunit protein uL1 (Desulfovibrio desulfuricans (strain ATCC 27774 / DSM 6949 / MB)).